A 379-amino-acid polypeptide reads, in one-letter code: Homoserine O-succinyltransferase (379 aa).

Residues 51-360 (NAVLICHALS…DSPYGHDAFL (310 aa)) form the AB hydrolase-1 domain. Ser157 acts as the Nucleophile in catalysis. A substrate-binding site is contributed by Arg227. Active-site residues include Asp323 and His356. Residue Asp357 coordinates substrate.

Belongs to the AB hydrolase superfamily. MetX family. As to quaternary structure, homodimer.

The protein resides in the cytoplasm. It carries out the reaction L-homoserine + succinyl-CoA = O-succinyl-L-homoserine + CoA. Its pathway is amino-acid biosynthesis; L-methionine biosynthesis via de novo pathway; O-succinyl-L-homoserine from L-homoserine: step 1/1. Functionally, transfers a succinyl group from succinyl-CoA to L-homoserine, forming succinyl-L-homoserine. The polypeptide is Homoserine O-succinyltransferase (Pseudomonas putida (strain W619)).